The sequence spans 102 residues: Small ribosomal subunit protein uS10 (102 aa).

It belongs to the universal ribosomal protein uS10 family. Part of the 30S ribosomal subunit.

Its function is as follows. Involved in the binding of tRNA to the ribosomes. In Treponema pallidum (strain Nichols), this protein is Small ribosomal subunit protein uS10.